Consider the following 428-residue polypeptide: Adenylosuccinate synthetase (428 aa).

GTP-binding positions include 12 to 18 (GDEGKGK) and 40 to 42 (GHT). The Proton acceptor role is filled by aspartate 13. Aspartate 13 and glycine 40 together coordinate Mg(2+). IMP is bound by residues 13 to 16 (DEGK), 38 to 41 (NAGH), threonine 130, arginine 144, glutamine 225, threonine 240, and arginine 304. Catalysis depends on histidine 41, which acts as the Proton donor. 300 to 306 (VTTGRAR) contacts substrate. GTP is bound by residues arginine 306, 332-334 (KID), and 414-416 (SVG).

It belongs to the adenylosuccinate synthetase family. Homodimer. Mg(2+) is required as a cofactor.

The protein resides in the cytoplasm. The catalysed reaction is IMP + L-aspartate + GTP = N(6)-(1,2-dicarboxyethyl)-AMP + GDP + phosphate + 2 H(+). The protein operates within purine metabolism; AMP biosynthesis via de novo pathway; AMP from IMP: step 1/2. Functionally, plays an important role in the de novo pathway of purine nucleotide biosynthesis. Catalyzes the first committed step in the biosynthesis of AMP from IMP. In Clostridium botulinum (strain Okra / Type B1), this protein is Adenylosuccinate synthetase.